A 921-amino-acid polypeptide reads, in one-letter code: Extended synaptotagmin-2 (921 aa).

The Cytoplasmic portion of the chain corresponds to 1–103 (MTANRDAALS…RPGGPENPGG (103 aa)). Residues 1–103 (MTANRDAALS…RPGGPENPGG (103 aa)) form a disordered region. Residues 58 to 75 (GARRRAKTARGLRGHRQR) show a composition bias toward basic residues. A helical membrane pass occupies residues 104–124 (VLSVELPGLLAQLARSFALLL). At 125 to 127 (PVY) the chain is on the lumenal side. A helical membrane pass occupies residues 128-148 (ALGYLGLSFSWVLLALALLAW). Residues 149–921 (CRRSRGLKAL…EDGTRPQAMT (773 aa)) lie on the Cytoplasmic side of the membrane. Positions 191 to 370 (DTERAEWLNK…LPNRITVPLV (180 aa)) constitute an SMP-LTD domain. 2 consecutive C2 domains span residues 369–489 (LVSE…DEWF) and 514–639 (NLDK…QLSN). Lys400, Asp401, Asp413, Asp460, Glu461, Asp462, Asp464, Asp466, and Asp467 together coordinate Ca(2+). Residues 660–754 (RERPPDHQHS…GHISVKEPTP (95 aa)) are disordered. Ser691 and Ser693 each carry phosphoserine. Thr705 is modified (phosphothreonine). Ser736, Ser738, Ser739, Ser743, Ser748, Ser755, Ser758, and Ser761 each carry phosphoserine. Residues 786–908 (PLGQIQLTIR…ELAKGWTQWY (123 aa)) enclose the C2 3 domain. A required for phosphatidylinositol 4,5-bisphosphate-dependent location at the cell membrane region spans residues 833–840 (KRRSGRRK).

Belongs to the extended synaptotagmin family. In terms of assembly, homodimer. Interacts with ESYT1 and ESYT3. Interacts with FGFR1 that has been activated by FGF1 binding. Interacts with the AP-2 complex; identified in a complex with the AP-2 complex and FGFR1. As to expression, widely expressed with high level in cerebellum.

The protein localises to the cell membrane. The protein resides in the endoplasmic reticulum membrane. Its function is as follows. Tethers the endoplasmic reticulum to the cell membrane and promotes the formation of appositions between the endoplasmic reticulum and the cell membrane. Binds glycerophospholipids in a barrel-like domain and may play a role in cellular lipid transport. Plays a role in FGF signaling via its role in the rapid internalization of FGFR1 that has been activated by FGF1 binding; this occurs most likely via the AP-2 complex. Promotes the localization of SACM1L at endoplasmic reticulum-plasma membrane contact sites (EPCS). In Homo sapiens (Human), this protein is Extended synaptotagmin-2.